Here is a 132-residue protein sequence, read N- to C-terminus: Small ribosomal subunit protein uS8 (132 aa).

It belongs to the universal ribosomal protein uS8 family. Part of the 30S ribosomal subunit. Contacts proteins S5 and S12.

In terms of biological role, one of the primary rRNA binding proteins, it binds directly to 16S rRNA central domain where it helps coordinate assembly of the platform of the 30S subunit. This is Small ribosomal subunit protein uS8 from Rickettsia massiliae (strain Mtu5).